The primary structure comprises 306 residues: Phenylcoumaran benzylic ether reductase IRL1 (306 aa).

Residues 10 to 16, arginine 35, and lysine 44 contribute to the NADP(+) site; that span reads GATGYIG. Catalysis depends on lysine 132, which acts as the Proton acceptor. An NADP(+)-binding site is contributed by arginine 136.

It belongs to the NmrA-type oxidoreductase family. Isoflavone reductase subfamily. Highly expressed in sclerotesta. Expressed in roots, and two-to-four year stems.

The enzyme catalyses (-)-dehydrodiconiferyl alcohol + NADPH + H(+) = (S)-isodihydrodehydrodiconiferyl alcohol + NADP(+). The catalysed reaction is (+)-dehydrodiconiferyl alcohol + NADPH + H(+) = (R)-isodihydrodehydrodiconiferyl alcohol + NADP(+). It carries out the reaction (2R,3S)-dihydrodehydrodiconiferyl alcohol + NADPH + H(+) = (S)-tetrahydrodehydrodiconiferyl alcohol + NADP(+). It catalyses the reaction (2S,3R)-dihydrodehydrodiconiferyl alcohol + NADPH + H(+) = (R)-tetrahydrodehydrodiconiferyl alcohol + NADP(+). Its function is as follows. Oxidoreductase involved in lignan biosynthesis. Catalyzes the NADPH-dependent reduction of phenylcoumaran benzylic ethers. Converts dehydrodiconiferyl alcohol (DDC) to isodihydrodehydrodiconiferyl alcohol (IDDDC), and dihydrodehydrodiconiferyl alcohol (DDDC) to tetrahydrodehydrodiconiferyl alcohol (TDDC). May regulate changes in lignin content and accumulation of flavonoids. In Ginkgo biloba (Ginkgo), this protein is Phenylcoumaran benzylic ether reductase IRL1.